A 331-amino-acid chain; its full sequence is MELLPRRQQEVLQATVHHYVDTIEPVGSKTLVQRFGLQASSATVRSAMGALEQKGLLVQPHPSAGRIPSPRGYRHYVDCLLPKPGAAVHHLEQELTQLSLRWAALDDLLQQLTRRLTDFTGLMSLITLPQPSEQRLHAIRLVPTDERLLVMLVADSSQTHHLNLRLPHGSVHQVAALERWTDDQLHQSGQISWESLPQQLQTCGQALREALHNEEGRFISPSDQSAHVHGVSRLVAQPEFSDSTKVAPLLDLMDCNPAAFIPSGPGHDDWVWIGGEHPHTALSDCSVIQSSYRDGQGGVGQVALVGPMRMAYATARAAVQCVAKHLNHLLS.

Belongs to the HrcA family.

In terms of biological role, negative regulator of class I heat shock genes (grpE-dnaK-dnaJ and groELS operons). Prevents heat-shock induction of these operons. The sequence is that of Heat-inducible transcription repressor HrcA from Synechococcus sp. (strain WH7803).